The primary structure comprises 228 residues: L-ribulose-5-phosphate 4-epimerase UlaF (228 aa).

Residues 26-27 (GN), 43-44 (SG), and 72-73 (SS) each bind substrate. D74, H93, and H95 together coordinate Zn(2+). D118 serves as the catalytic Proton donor/acceptor. A Zn(2+)-binding site is contributed by H167. Y225 functions as the Proton donor/acceptor in the catalytic mechanism.

Belongs to the aldolase class II family. AraD/FucA subfamily. Zn(2+) serves as cofactor.

It catalyses the reaction L-ribulose 5-phosphate = D-xylulose 5-phosphate. It functions in the pathway cofactor degradation; L-ascorbate degradation; D-xylulose 5-phosphate from L-ascorbate: step 4/4. In terms of biological role, catalyzes the isomerization of L-ribulose 5-phosphate to D-xylulose 5-phosphate. Is involved in the anaerobic L-ascorbate utilization. The sequence is that of L-ribulose-5-phosphate 4-epimerase UlaF from Escherichia coli (strain 55989 / EAEC).